We begin with the raw amino-acid sequence, 649 residues long: Mitochondrial Rho GTPase 1 (649 aa).

Residues 1–623 (MTKETIRVVI…KPTNIDYSSA (623 aa)) lie on the Cytoplasmic side of the membrane. A Miro 1 domain is found at 3-176 (KETIRVVICG…FYLCQRSISY (174 aa)). GTP-binding positions include 12–19 (GDDGVGKT), 61–63 (DTD), and 115–118 (NKCD). 2 consecutive EF-hand domains span residues 192-227 (SAVA…CFGK) and 320-355 (KGYR…TPGL). Ca(2+) contacts are provided by aspartate 205, aspartate 207, aspartate 209, glutamate 216, aspartate 333, aspartate 335, aspartate 337, and glutamate 344. In terms of domain architecture, Miro 2 spans 436 to 601 (RKVFNCFVVG…FKKIIQASLE (166 aa)). GTP is bound by residues 445-452 (GKRNSGKS), 481-485 (EVTGD), and 550-553 (LKAD). A helical; Anchor for type IV membrane protein membrane pass occupies residues 624-644 (VILGSSIGFLALFSYTMIKLL). Over 645–649 (KPTQQ) the chain is Mitochondrial intermembrane.

The protein belongs to the mitochondrial Rho GTPase family.

It is found in the mitochondrion outer membrane. Its function is as follows. Mitochondrial GTPase involved in mitochondrial trafficking. Probably involved in control of anterograde transport of mitochondria and their subcellular distribution. In Candida glabrata (strain ATCC 2001 / BCRC 20586 / JCM 3761 / NBRC 0622 / NRRL Y-65 / CBS 138) (Yeast), this protein is Mitochondrial Rho GTPase 1 (GEM1).